We begin with the raw amino-acid sequence, 220 residues long: UPF0319 protein YccT (220 aa).

Residues 1-20 form the signal peptide; that stretch reads MKTGALATFLALCLPATVFA.

Belongs to the UPF0319 family.

In Salmonella heidelberg (strain SL476), this protein is UPF0319 protein YccT.